A 521-amino-acid chain; its full sequence is Calcium-dependent protein kinase 33 (521 aa).

Glycine 2 carries the N-myristoyl glycine lipid modification. Positions 15-56 (PQQNGERSVEIENRRRSTHQDPSKISTGTNQPPPWRNPAKHS) are disordered. The span at 21–36 (RSVEIENRRRSTHQDP) shows a compositional bias: basic and acidic residues. The 259-residue stretch at 73 to 331 (YTLSKELGRG…AAEVLKHPWL (259 aa)) folds into the Protein kinase domain. Residues 79–87 (LGRGQFGVT) and lysine 102 each bind ATP. Aspartate 197 (proton acceptor) is an active-site residue. The residue at position 237 (serine 237) is a Phosphoserine. The interval 337 to 367 (ASDKPIDSAVLSRMKQFRAMNKLKKLALKVI) is autoinhibitory domain. EF-hand domains lie at 374 to 409 (EEIQ…LGSR), 410 to 445 (LTEA…RHRL), 446 to 481 (ESNE…YGMG), and 482 to 516 (DDAT…GNPQ). Residues aspartate 387, aspartate 389, serine 391, threonine 393, glutamate 398, aspartate 423, aspartate 425, asparagine 427, serine 429, glutamate 434, aspartate 459, aspartate 461, serine 463, tyrosine 465, glutamate 470, aspartate 494, aspartate 496, aspartate 498, arginine 500, and glutamate 505 each contribute to the Ca(2+) site.

Belongs to the protein kinase superfamily. Ser/Thr protein kinase family. CDPK subfamily. As to quaternary structure, interacts with THI1. Interacts with FD and FDP. Post-translationally, autophosphorylated. As to expression, expressed in primary roots, leaves, inflorescences, siliques and guard cells. Expressed in the shoot apical meristem.

It is found in the cell membrane. It localises to the nucleus. Its subcellular location is the cytoplasm. The catalysed reaction is L-seryl-[protein] + ATP = O-phospho-L-seryl-[protein] + ADP + H(+). It carries out the reaction L-threonyl-[protein] + ATP = O-phospho-L-threonyl-[protein] + ADP + H(+). Activated by calcium. Autophosphorylation may play an important role in the regulation of the kinase activity. Repressed by THI1 through a negative regulation of the autophosphorylation activity in the presence of Ca(2+). Ca(2+)-dependent protein kinase. Negative regulator of stomatal closure and slow anion currents. Unable to phosphorylate THI1 in vitro, but the kinase activity is essential for the stomatal closure regulation. Phosphorylates FD. May play a role in signal transduction pathways that involve calcium as a second messenger. This is Calcium-dependent protein kinase 33 from Arabidopsis thaliana (Mouse-ear cress).